The primary structure comprises 277 residues: SF-assemblin (277 aa).

The interval 1 to 20 (MATSGMVSPTSGRPFSPMRS) is disordered. The nonhelical region stretch occupies residues 1–27 (MATSGMVSPTSGRPFSPMRSSVLTTTG). The rod stretch occupies residues 28-277 (SAIKLEHVSE…KMVNMQHNSA (250 aa)). A coiled-coil region spans residues 70 to 90 (RLEKSMEAEVKRRAESDKQLQ).

This sequence belongs to the SF-assemblin family. Post-translationally, the N-terminus is blocked.

Its subcellular location is the cytoplasm. The protein localises to the cytoskeleton. Functionally, major component of the striated microtubule-associated fibers (SMAFs; system-I-fibers). The chain is SF-assemblin from Dunaliella bioculata (Green alga).